Reading from the N-terminus, the 425-residue chain is tRNA(Ile)-lysidine synthase (425 aa).

ATP is bound at residue 27–32; it reads SGGLDS.

This sequence belongs to the tRNA(Ile)-lysidine synthase family.

The protein resides in the cytoplasm. The enzyme catalyses cytidine(34) in tRNA(Ile2) + L-lysine + ATP = lysidine(34) in tRNA(Ile2) + AMP + diphosphate + H(+). Functionally, ligates lysine onto the cytidine present at position 34 of the AUA codon-specific tRNA(Ile) that contains the anticodon CAU, in an ATP-dependent manner. Cytidine is converted to lysidine, thus changing the amino acid specificity of the tRNA from methionine to isoleucine. In Streptococcus pneumoniae (strain Hungary19A-6), this protein is tRNA(Ile)-lysidine synthase.